The primary structure comprises 361 residues: tRNA N6-adenosine threonylcarbamoyltransferase (361 aa).

2 residues coordinate Fe cation: His110 and His114. Substrate is bound by residues 132–136 (LVSGG), Asp165, Gly178, Asp182, and Asn289. A Fe cation-binding site is contributed by Asp317.

This sequence belongs to the KAE1 / TsaD family. The cofactor is Fe(2+).

The protein localises to the cytoplasm. The enzyme catalyses L-threonylcarbamoyladenylate + adenosine(37) in tRNA = N(6)-L-threonylcarbamoyladenosine(37) in tRNA + AMP + H(+). In terms of biological role, required for the formation of a threonylcarbamoyl group on adenosine at position 37 (t(6)A37) in tRNAs that read codons beginning with adenine. Is involved in the transfer of the threonylcarbamoyl moiety of threonylcarbamoyl-AMP (TC-AMP) to the N6 group of A37, together with TsaE and TsaB. TsaD likely plays a direct catalytic role in this reaction. The chain is tRNA N6-adenosine threonylcarbamoyltransferase from Nitratidesulfovibrio vulgaris (strain ATCC 29579 / DSM 644 / CCUG 34227 / NCIMB 8303 / VKM B-1760 / Hildenborough) (Desulfovibrio vulgaris).